Consider the following 156-residue polypeptide: Ribosomal RNA large subunit methyltransferase H (156 aa).

Residues L72, G104, and 123–128 (LSKMTL) contribute to the S-adenosyl-L-methionine site.

The protein belongs to the RNA methyltransferase RlmH family. Homodimer.

The protein resides in the cytoplasm. The catalysed reaction is pseudouridine(1915) in 23S rRNA + S-adenosyl-L-methionine = N(3)-methylpseudouridine(1915) in 23S rRNA + S-adenosyl-L-homocysteine + H(+). In terms of biological role, specifically methylates the pseudouridine at position 1915 (m3Psi1915) in 23S rRNA. This is Ribosomal RNA large subunit methyltransferase H from Maridesulfovibrio salexigens (strain ATCC 14822 / DSM 2638 / NCIMB 8403 / VKM B-1763) (Desulfovibrio salexigens).